A 336-amino-acid chain; its full sequence is Tyrosine phosphatase-like protein H1 (336 aa).

The Tyrosine-protein phosphatase domain occupies 27 to 295 (IKKEHHKLMK…EICYRVLCEA (269 aa)).

It belongs to the protein-tyrosine phosphatase family.

In Microplitis demolitor (Parasitoid wasp), this protein is Tyrosine phosphatase-like protein H1 (H1).